Consider the following 121-residue polypeptide: Small ribosomal subunit protein bS6 (121 aa).

Belongs to the bacterial ribosomal protein bS6 family.

In terms of biological role, binds together with bS18 to 16S ribosomal RNA. This chain is Small ribosomal subunit protein bS6, found in Rickettsia conorii (strain ATCC VR-613 / Malish 7).